We begin with the raw amino-acid sequence, 88 residues long: Small ribosomal subunit protein uS15 (88 aa).

It belongs to the universal ribosomal protein uS15 family. In terms of assembly, part of the 30S ribosomal subunit. Forms a bridge to the 50S subunit in the 70S ribosome, contacting the 23S rRNA.

One of the primary rRNA binding proteins, it binds directly to 16S rRNA where it helps nucleate assembly of the platform of the 30S subunit by binding and bridging several RNA helices of the 16S rRNA. In terms of biological role, forms an intersubunit bridge (bridge B4) with the 23S rRNA of the 50S subunit in the ribosome. The protein is Small ribosomal subunit protein uS15 of Francisella tularensis subsp. holarctica (strain LVS).